A 159-amino-acid chain; its full sequence is Endoribonuclease YbeY (159 aa).

The Zn(2+) site is built by H119, H123, and H129.

This sequence belongs to the endoribonuclease YbeY family. It depends on Zn(2+) as a cofactor.

It is found in the cytoplasm. In terms of biological role, single strand-specific metallo-endoribonuclease involved in late-stage 70S ribosome quality control and in maturation of the 3' terminus of the 16S rRNA. The protein is Endoribonuclease YbeY of Acinetobacter baylyi (strain ATCC 33305 / BD413 / ADP1).